Here is a 170-residue protein sequence, read N- to C-terminus: Photosystem II extrinsic protein V (170 aa).

An N-terminal signal peptide occupies residues 1 to 34; it reads MNKILGIDPLKKFIFGISAFVLLFWQLNVGAANA. Heme c is bound by residues cysteine 70, cysteine 73, histidine 74, and histidine 125.

Belongs to the cytochrome c family. PsbV subfamily. In terms of assembly, PSII is composed of 1 copy each of membrane proteins PsbA, PsbB, PsbC, PsbD, PsbE, PsbF, PsbH, PsbI, PsbJ, PsbK, PsbL, PsbM, PsbT, PsbX, PsbY, PsbZ, Psb30/Ycf12, peripheral proteins PsbO, CyanoQ (PsbQ), PsbU, PsbV and a large number of cofactors. It forms dimeric complexes. Requires heme c as cofactor.

The protein resides in the cellular thylakoid membrane. Functionally, one of the extrinsic, lumenal subunits of photosystem II (PSII). PSII is a light-driven water plastoquinone oxidoreductase, using light energy to abstract electrons from H(2)O, generating a proton gradient subsequently used for ATP formation. The extrinsic proteins stabilize the structure of photosystem II oxygen-evolving complex (OEC), the ion environment of oxygen evolution and protect the OEC against heat-induced inactivation. Low-potential cytochrome c that plays a role in the OEC of PSII. In Picosynechococcus sp. (strain ATCC 27264 / PCC 7002 / PR-6) (Agmenellum quadruplicatum), this protein is Photosystem II extrinsic protein V.